We begin with the raw amino-acid sequence, 53 residues long: MREKYTKEEAVKNWEKKKNKPSSPKGVGEFLKKKKGRFYIIGKCITMLLCSHK.

The span at 1–16 (MREKYTKEEAVKNWEK) shows a compositional bias: basic and acidic residues. Residues 1–28 (MREKYTKEEAVKNWEKKKNKPSSPKGVG) form a disordered region. The tract at residues 22–53 (SSPKGVGEFLKKKKGRFYIIGKCITMLLCSHK) is required for DVL/RTFL small polypeptide activity. Residues 30–46 (FLKKKKGRFYIIGKCIT) form a helical membrane-spanning segment.

It belongs to the DVL/RTFL small polypeptides family.

It is found in the cell membrane. Its function is as follows. Small polypeptide acting as a regulatory molecule which coordinates cellular responses required for differentiation, growth and development, probably by restricting polar cell proliferation in lateral organs and coordinating socket cell recruitment and differentiation at trichome sites. The polypeptide is Small polypeptide DEVIL 7 (Arabidopsis thaliana (Mouse-ear cress)).